Consider the following 136-residue polypeptide: ATP synthase F(0) complex subunit C1, mitochondrial (136 aa).

The transit peptide at 1-61 (MQTTGALLIS…REFQTSVVSR (61 aa)) directs the protein to the mitochondrion. Residues 77–97 (VGVAGSGAGIGTVFGSLIIGY) form a helical membrane-spanning segment. N6,N6,N6-trimethyllysine is present on K104. The helical transmembrane segment at 112 to 132 (ILGFALSEAMGLFCLMVAFLI) threads the bilayer.

Belongs to the ATPase C chain family. Homooctamer; the c-ring consists of eight c subunits forming a circle, and each subunit adopts a hairpin shape. Component of the ATP synthase complex composed at least of ATP5F1A/subunit alpha, ATP5F1B/subunit beta, ATP5MC1/subunit c (homooctomer), MT-ATP6/subunit a, MT-ATP8/subunit 8, ATP5ME/subunit e, ATP5MF/subunit f, ATP5MG/subunit g, ATP5MK/subunit k, ATP5MJ/subunit j, ATP5F1C/subunit gamma, ATP5F1D/subunit delta, ATP5F1E/subunit epsilon, ATP5PF/subunit F6, ATP5PB/subunit b, ATP5PD/subunit d, ATP5PO/subunit OSCP. ATP synthase complex consists of a soluble F(1) head domain (subunits alpha(3) and beta(3)) - the catalytic core - and a membrane F(0) domain - the membrane proton channel (subunits c, a, 8, e, f, g, k and j). These two domains are linked by a central stalk (subunits gamma, delta, and epsilon) rotating inside the F1 region and a stationary peripheral stalk (subunits F6, b, d, and OSCP). Interacts with TMEM70 (homooligomer form); this interaction facilitates the oligomer formation of subunit c/ATP5MC1 (c-ring) and the c-ring membrane insertion and also protects ATP5MC1 against intramitochondrial proteolysis. In terms of processing, trimethylated by ATPSCKMT at Lys-104. Methylation is required for proper incorporation of the C subunit into the ATP synthase complex and mitochondrial respiration.

Its subcellular location is the mitochondrion membrane. The enzyme catalyses H(+)(in) = H(+)(out). In terms of biological role, subunit c, of the mitochondrial membrane ATP synthase complex (F(1)F(0) ATP synthase or Complex V) that produces ATP from ADP in the presence of a proton gradient across the membrane which is generated by electron transport complexes of the respiratory chain. ATP synthase complex consist of a soluble F(1) head domain - the catalytic core - and a membrane F(1) domain - the membrane proton channel. These two domains are linked by a central stalk rotating inside the F(1) region and a stationary peripheral stalk. During catalysis, ATP synthesis in the catalytic domain of F(1) is coupled via a rotary mechanism of the central stalk subunits to proton translocation. With the subunit a (MT-ATP6), forms the proton-conducting channel in the F(0) domain, that contains two crucial half-channels (inlet and outlet) that facilitate proton movement from the mitochondrial intermembrane space (IMS) into the matrix. Protons are taken up via the inlet half-channel and released through the outlet half-channel, following a Grotthuss mechanism. The polypeptide is ATP synthase F(0) complex subunit C1, mitochondrial (Ovis aries (Sheep)).